Reading from the N-terminus, the 562-residue chain is MRSDMIKKGDHQAPARSLLHATGALKNPTDMNKPFVAICNSYIDIVPGHVHLRELADIAKEAIREAGAIPFEFNTIGVDDGIAMGHIGMRYSLPSREIIADAAETVINAHWFDGVFYIPNCDKITPGMLLAAVRTNVPAIFCSGGPMKAGLSAQGKALTLSSMFEAVGAFKEGKLSKEAFLDMEQNACPTCGSCAGMFTANSMNCLMEVLGLALPYNGTALAVSEQRREMIREAAFKLVDNIKKDIKPLDIVTREAIDDAFALDMAMGGSTNTVLHTLAIANEAGIDYDLERINEIAKKTPYLSKIAPSSSYSMHDVHEAGGCPAIINELMKKEGTLHPDRLTVTGKTLRENNEGKEIKNFDVIHSLDDPYDKQGGLSILFGNIAPKGAVIKVGGVDPSIKIFTGKAICFNSHDEAVEAIDNKIVREGHVVVIRYEGPKGGPGMPEMLAPTSSIVGRGLGKDVALITDGRFSGATRGIAVGHISPEAASGGPIGLIKDGDEVTIDLINRTLNVNQTKEELNHRKEALQPFKAKVKSGYLARYTALVTSANTGGIMQVPENLI.

D80 is a Mg(2+) binding site. C121 contacts [2Fe-2S] cluster. The Mg(2+) site is built by D122 and K123. K123 carries the post-translational modification N6-carboxylysine. C194 provides a ligand contact to [2Fe-2S] cluster. E446 provides a ligand contact to Mg(2+). The active-site Proton acceptor is S472.

The protein belongs to the IlvD/Edd family. Homodimer. It depends on [2Fe-2S] cluster as a cofactor. Mg(2+) serves as cofactor.

The enzyme catalyses (2R)-2,3-dihydroxy-3-methylbutanoate = 3-methyl-2-oxobutanoate + H2O. The catalysed reaction is (2R,3R)-2,3-dihydroxy-3-methylpentanoate = (S)-3-methyl-2-oxopentanoate + H2O. It participates in amino-acid biosynthesis; L-isoleucine biosynthesis; L-isoleucine from 2-oxobutanoate: step 3/4. The protein operates within amino-acid biosynthesis; L-valine biosynthesis; L-valine from pyruvate: step 3/4. Functions in the biosynthesis of branched-chain amino acids. Catalyzes the dehydration of (2R,3R)-2,3-dihydroxy-3-methylpentanoate (2,3-dihydroxy-3-methylvalerate) into 2-oxo-3-methylpentanoate (2-oxo-3-methylvalerate) and of (2R)-2,3-dihydroxy-3-methylbutanoate (2,3-dihydroxyisovalerate) into 2-oxo-3-methylbutanoate (2-oxoisovalerate), the penultimate precursor to L-isoleucine and L-valine, respectively. The chain is Dihydroxy-acid dehydratase from Staphylococcus haemolyticus (strain JCSC1435).